A 122-amino-acid chain; its full sequence is Ribonuclease P protein component (122 aa).

It belongs to the RnpA family. In terms of assembly, consists of a catalytic RNA component (M1 or rnpB) and a protein subunit.

It carries out the reaction Endonucleolytic cleavage of RNA, removing 5'-extranucleotides from tRNA precursor.. In terms of biological role, RNaseP catalyzes the removal of the 5'-leader sequence from pre-tRNA to produce the mature 5'-terminus. It can also cleave other RNA substrates such as 4.5S RNA. The protein component plays an auxiliary but essential role in vivo by binding to the 5'-leader sequence and broadening the substrate specificity of the ribozyme. The polypeptide is Ribonuclease P protein component (Roseiflexus castenholzii (strain DSM 13941 / HLO8)).